The sequence spans 132 residues: Small ribosomal subunit protein uS8 (132 aa).

The protein belongs to the universal ribosomal protein uS8 family. As to quaternary structure, part of the 30S ribosomal subunit. Contacts proteins S5 and S12.

Functionally, one of the primary rRNA binding proteins, it binds directly to 16S rRNA central domain where it helps coordinate assembly of the platform of the 30S subunit. This is Small ribosomal subunit protein uS8 from Xylella fastidiosa (strain 9a5c).